The following is a 495-amino-acid chain: Flagellin (495 aa).

The protein belongs to the bacterial flagellin family.

The protein resides in the secreted. The protein localises to the bacterial flagellum. Its function is as follows. Flagellin is the subunit protein which polymerizes to form the filaments of bacterial flagella. The chain is Flagellin (fliC) from Salmonella paratyphi A (strain ATCC 9150 / SARB42).